The following is a 450-amino-acid chain: Phosphoglucosamine mutase (450 aa).

S102 serves as the catalytic Phosphoserine intermediate. Residues S102, D244, D246, and D248 each coordinate Mg(2+). The residue at position 102 (S102) is a Phosphoserine.

It belongs to the phosphohexose mutase family. Requires Mg(2+) as cofactor. In terms of processing, activated by phosphorylation.

The enzyme catalyses alpha-D-glucosamine 1-phosphate = D-glucosamine 6-phosphate. Functionally, catalyzes the conversion of glucosamine-6-phosphate to glucosamine-1-phosphate. This is Phosphoglucosamine mutase from Desulfovibrio desulfuricans (strain ATCC 27774 / DSM 6949 / MB).